The chain runs to 434 residues: RNA-binding protein SRO9 (434 aa).

A compositionally biased stretch (low complexity) spans 1 to 13 (MSAETAAANTATA). The interval 1–243 (MSAETAAANT…FHHNQQHPQQ (243 aa)) is disordered. Residues 26–41 (SKQVNLTPAPLPTSSP) show a composition bias toward polar residues. At Ser55 the chain carries Phosphoserine. Low complexity predominate over residues 93–124 (KRSGSKNGASNGNSNKSKNNKTAASSTSSSNA). Over residues 125–140 (NRKKKHHQHNAKKQQQ) the composition is skewed to basic residues. Residue Ser148 is modified to Phosphoserine. Residue Lys156 forms a Glycyl lysine isopeptide (Lys-Gly) (interchain with G-Cter in ubiquitin) linkage. Polar residues predominate over residues 158–167 (ATSQENGQST). A compositionally biased stretch (basic residues) spans 173–195 (PHHRNHHHSHHHNSNGPQRRKFH). The segment covering 196 to 208 (NSNNAGMPQNQGF) has biased composition (polar residues). Over residues 218–227 (RNARNNNNNR) the composition is skewed to low complexity. Basic residues predominate over residues 228-238 (SKYHNHFHHNQ). Residues 255–351 (VQPVLMAINN…KEGDNVTGEA (97 aa)) form the HTH La-type RNA-binding domain. Glycyl lysine isopeptide (Lys-Gly) (interchain with G-Cter in ubiquitin) cross-links involve residues Lys301, Lys342, and Lys352. The disordered stretch occupies residues 396-434 (SLPPVPQQEEESSTELASQEQETKEDSAPVAAGESESSL). Residue Ser422 is modified to Phosphoserine.

As to quaternary structure, interacts with HAP1. Component of the HMC including HAP1, SRO9 and YDJ1.

The protein resides in the cytoplasm. Its function is as follows. May overlap in function with tropomyosin and may be involved in organization of actin filaments. Acts as a multicopy suppressor of RHO3 mutation. RNA-binding protein which may modulate mRNA translation. Involved in heme regulation of HAP1, as a component of the high-molecular-weight complex (HMC). This chain is RNA-binding protein SRO9 (SRO9), found in Saccharomyces cerevisiae (strain ATCC 204508 / S288c) (Baker's yeast).